The sequence spans 400 residues: NADPH dehydrogenase 2 (400 aa).

Positions 38 and 115 each coordinate FMN. H192 and N195 together coordinate substrate. The Proton donor role is filled by Y197. R244 and R349 together coordinate FMN. Residue S353 is modified to Phosphoserine. Position 376 (Y376) interacts with substrate. S379 carries the post-translational modification Phosphoserine.

The protein belongs to the NADH:flavin oxidoreductase/NADH oxidase family. In terms of assembly, homodimer or heterodimer with OYE3. It depends on FMN as a cofactor.

It localises to the cytoplasm. The protein resides in the nucleus. Its subcellular location is the mitochondrion. It carries out the reaction A + NADPH + H(+) = AH2 + NADP(+). In terms of biological role, flavin-dependent enoate reductase that catalyzes the chemo- and stereoslective hydrogenation of electron-poor alkenes. The enzyme is reduced by NADPH, and oxygen, quinones, and alpha,beta-unsaturated aldehydes and ketones can act as electron acceptors to complete catalytic turnover. The physiological oxidant remains elusive. Has an antioxidant activity, reducing reactive oxygen species (ROS) levels when overexpressed. Formation of OYE2-OYE3 heterodimers contribute to the induction of programmed cell death upon oxidative stress. This is NADPH dehydrogenase 2 from Saccharomyces cerevisiae (strain ATCC 204508 / S288c) (Baker's yeast).